A 318-amino-acid polypeptide reads, in one-letter code: Thymidylate synthase (318 aa).

DUMP-binding positions include arginine 25 and 180–181 (RR). Cysteine 200 (nucleophile) is an active-site residue. DUMP contacts are provided by residues 220-223 (RSGD), asparagine 231, and 261-263 (HIY). (6R)-5,10-methylene-5,6,7,8-tetrahydrofolate is bound at residue aspartate 223. Alanine 317 serves as a coordination point for (6R)-5,10-methylene-5,6,7,8-tetrahydrofolate.

Belongs to the thymidylate synthase family. Bacterial-type ThyA subfamily. As to quaternary structure, homodimer.

It localises to the cytoplasm. It catalyses the reaction dUMP + (6R)-5,10-methylene-5,6,7,8-tetrahydrofolate = 7,8-dihydrofolate + dTMP. The protein operates within pyrimidine metabolism; dTTP biosynthesis. Catalyzes the reductive methylation of 2'-deoxyuridine-5'-monophosphate (dUMP) to 2'-deoxythymidine-5'-monophosphate (dTMP) while utilizing 5,10-methylenetetrahydrofolate (mTHF) as the methyl donor and reductant in the reaction, yielding dihydrofolate (DHF) as a by-product. This enzymatic reaction provides an intracellular de novo source of dTMP, an essential precursor for DNA biosynthesis. This is Thymidylate synthase from Bacillus cereus (strain ZK / E33L).